A 106-amino-acid chain; its full sequence is Thioredoxin-2 (106 aa).

One can recognise a Thioredoxin domain in the interval 2 to 106 (VYQIKDKADL…RLEDVIKANI (105 aa)). Residues Cys-32 and Cys-35 each act as nucleophile in the active site. Cysteines 32 and 35 form a disulfide.

The protein belongs to the thioredoxin family.

In terms of biological role, participates in various redox reactions through the reversible oxidation of its active center dithiol to a disulfide and catalyzes dithiol-disulfide exchange reactions. As a reducing substrate of peroxiredoxin 1, thioredoxin 2 is preferred over thioredoxin 1. The sequence is that of Thioredoxin-2 from Drosophila yakuba (Fruit fly).